The chain runs to 178 residues: Fatty-acid and retinol-binding protein 1 (178 aa).

A signal peptide spans 1-16 (MYHQLILMALIGVIMA). Coiled-coil stretches lie at residues 67–89 (DAALEALKNKSDKLYQKAVELRN) and 122–154 (QKLDMEKLKQAARDIIAKYEALNEETKEELKAT).

It belongs to the fatty-acid and retinol-binding protein (FARBP) family. In terms of processing, not glycosylated.

It localises to the secreted. Binds retinol and different fatty acids. The sequence is that of Fatty-acid and retinol-binding protein 1 from Litomosoides sigmodontis (Filarial nematode worm).